The following is a 598-amino-acid chain: Fructan 6-exohydrolase (598 aa).

An N-terminal signal peptide occupies residues 1–30 (MAARLPLAACVVAFHLCLLLSSLVRSPSTA). Asp-65 is a catalytic residue. 3 N-linked (GlcNAc...) asparagine glycosylation sites follow: Asn-93, Asn-288, and Asn-351. An intrachain disulfide couples Cys-451 to Cys-497. Residue Asn-572 is glycosylated (N-linked (GlcNAc...) asparagine).

Belongs to the glycosyl hydrolase 32 family. In terms of tissue distribution, expressed in leaves, stems, roots and inflorescences. Maximum expression is detected in stems, particularly the penultimate internode.

It carries out the reaction Hydrolysis of terminal, non-reducing (2-&gt;6)-linked beta-D-fructofuranose residues in fructans.. With respect to regulation, not inhibited by sucrose. Hydrolyzes levan-type beta-(2-&gt;6)-linked fructans to fructose, but not inulin-type beta-(2-&gt;1)-linked fructans. The polypeptide is Fructan 6-exohydrolase (Triticum aestivum (Wheat)).